Consider the following 250-residue polypeptide: Anamorsin homolog 1 (250 aa).

An N-terminal SAM-like domain region spans residues 1–104 (MNLKITINQQ…KKLNIPQQEF (104 aa)). The interval 104–149 (FNNCYGKYDYIEQKFQNQINFFKQVDINGKQEIIDENELLDDGVQV) is linker. [2Fe-2S] cluster is bound by residues C155, C162, C165, and C167. The segment at 155–167 (CASKPRACANCTC) is fe-S binding site A. Positions 193, 196, 204, and 207 each coordinate [4Fe-4S] cluster. 2 consecutive short sequence motifs (cx2C motif) follow at residues 193 to 196 (CGSC) and 204 to 207 (CANC). The tract at residues 193–207 (CGSCYLGDAFRCANC) is fe-S binding site B.

It belongs to the anamorsin family. In terms of assembly, monomer. The cofactor is [2Fe-2S] cluster. [4Fe-4S] cluster serves as cofactor.

It is found in the cytoplasm. Its subcellular location is the mitochondrion intermembrane space. Component of the cytosolic iron-sulfur (Fe-S) protein assembly (CIA) machinery. Required for the maturation of extramitochondrial Fe-S proteins. Part of an electron transfer chain functioning in an early step of cytosolic Fe-S biogenesis, facilitating the de novo assembly of a [4Fe-4S] cluster on the cytosolic Fe-S scaffold complex. Electrons are transferred from NADPH via a FAD- and FMN-containing diflavin oxidoreductase. Together with the diflavin oxidoreductase, also required for the assembly of the diferric tyrosyl radical cofactor of ribonucleotide reductase (RNR), probably by providing electrons for reduction during radical cofactor maturation in the catalytic small subunit. This chain is Anamorsin homolog 1, found in Paramecium tetraurelia.